The primary structure comprises 739 residues: MLKKIVTALGMSGMLLASNSAIADDKNTETATPQSVDLSPLRNLNKLDSPMDKDYNYHQAFKKLDPEQLKKDMQDLLTQSQDWWPADFGNYGPFFIRLSWHDAGTYRIYDGRGGANRGQQRFSPLNSWPDNVNLDKARQLLWPIKQKYGDAVSWSDLIVLAGTVSLESMGMKPIGFAFGREDDWQGDDTNWGLSPEEIMSSNVRDGKLAPAYAATQMGLIYVNPEGPDGKPDIKGAASEIRQAFRAMGMTDKETVALIAGGHTFGKTHGAVPEDKVKEAIGPAPDKAPIEQQGLGWHNSYGTGNGDDTMGSGLEGSWTSTPTFWNHDFLHNLYNLNWKKTLSPAGAHQWTPTNAKPENMVPDAHKLGVKHKPIMFTTDLALKEDDGFNKYTQEFYNNPEEFKEEFAKAWFKLTHRDMGPKSRYIGPWIPEQNFIWQDPVPAADYKQVSTQDIAQLKQDIIDSGLTNQQLIKTAWDSASTYRKTDYRGGSNGARIALAPEKDWQMNEPAKLEVVLAKLKEIQTNFNNSKTDGTKVSLADLIVLGGNVGVEQAAKQAGYNIQIPFVPGRTDATQAQTDIESFNYLKTKSDGFINYTDGSVSADKLPQALVEKASMLDLNIPEMTVLVGGMRALNVNYDNSQEGVLTTTPGQLNNSFFVNLLDMSTQWKKSDKKDGEYIGIGRKTGKQKWTASPVDLIFGSNSELKAVAQVYAENGNEQKFVNDFAKAWHKVMMLGRFDVQQ.

The signal sequence occupies residues 1 to 23; that stretch reads MLKKIVTALGMSGMLLASNSAIA. Positions 100 to 221 form a cross-link, tryptophyl-tyrosyl-methioninium (Trp-Tyr) (with M-247); it reads WHDAGTYRIY…YAATQMGLIY (122 aa). The active-site Proton acceptor is the His-101. Positions 221–247 form a cross-link, tryptophyl-tyrosyl-methioninium (Tyr-Met) (with W-100); the sequence is YVNPEGPDGKPDIKGAASEIRQAFRAM. Residue His-262 coordinates heme b.

The protein belongs to the peroxidase family. Peroxidase/catalase subfamily. In terms of assembly, homodimer or homotetramer. The cofactor is heme b. Post-translationally, formation of the three residue Trp-Tyr-Met cross-link is important for the catalase, but not the peroxidase activity of the enzyme.

The catalysed reaction is H2O2 + AH2 = A + 2 H2O. The enzyme catalyses 2 H2O2 = O2 + 2 H2O. Functionally, bifunctional enzyme with both catalase and broad-spectrum peroxidase activity. This is Catalase-peroxidase from Francisella tularensis subsp. novicida (strain U112).